The primary structure comprises 741 residues: Beta-galactosidase 10 (741 aa).

The signal sequence occupies residues 1–29 (MNRVTTESIASTAILVVMVFLFSWRSIEA). N31 carries an N-linked (GlcNAc...) asparagine glycan. E188 serves as the catalytic Proton donor. The active-site Nucleophile is the E257. Residues N358, N396, N469, N525, and N583 are each glycosylated (N-linked (GlcNAc...) asparagine).

It belongs to the glycosyl hydrolase 35 family. In terms of tissue distribution, ubiquitous.

The protein resides in the secreted. It is found in the extracellular space. The protein localises to the apoplast. It catalyses the reaction Hydrolysis of terminal non-reducing beta-D-galactose residues in beta-D-galactosides.. The protein is Beta-galactosidase 10 (BGAL10) of Arabidopsis thaliana (Mouse-ear cress).